Reading from the N-terminus, the 114-residue chain is T cell receptor beta variable 5-8 (114 aa).

The signal sequence occupies residues Met-1–Ala-21. In terms of domain architecture, Ig-like spans Gly-22 to Leu-114. Cys-42 and Cys-110 form a disulfide bridge. N-linked (GlcNAc...) asparagine glycosylation occurs at Asn-90.

As to quaternary structure, alpha-beta TR is a heterodimer composed of an alpha and beta chain; disulfide-linked. The alpha-beta TR is associated with the transmembrane signaling CD3 coreceptor proteins to form the TR-CD3 (TcR or TCR). The assembly of alpha-beta TR heterodimers with CD3 occurs in the endoplasmic reticulum where a single alpha-beta TR heterodimer associates with one CD3D-CD3E heterodimer, one CD3G-CD3E heterodimer and one CD247 homodimer forming a stable octameric structure. CD3D-CD3E and CD3G-CD3E heterodimers preferentially associate with TR alpha and TR beta chains, respectively. The association of the CD247 homodimer is the last step of TcR assembly in the endoplasmic reticulum and is required for transport to the cell surface.

It localises to the cell membrane. V region of the variable domain of T cell receptor (TR) beta chain that participates in the antigen recognition. Alpha-beta T cell receptors are antigen specific receptors which are essential to the immune response and are present on the cell surface of T lymphocytes. Recognize peptide-major histocompatibility (MH) (pMH) complexes that are displayed by antigen presenting cells (APC), a prerequisite for efficient T cell adaptive immunity against pathogens. Binding of alpha-beta TR to pMH complex initiates TR-CD3 clustering on the cell surface and intracellular activation of LCK that phosphorylates the ITAM motifs of CD3G, CD3D, CD3E and CD247 enabling the recruitment of ZAP70. In turn ZAP70 phosphorylates LAT, which recruits numerous signaling molecules to form the LAT signalosome. The LAT signalosome propagates signal branching to three major signaling pathways, the calcium, the mitogen-activated protein kinase (MAPK) kinase and the nuclear factor NF-kappa-B (NF-kB) pathways, leading to the mobilization of transcription factors that are critical for gene expression and essential for T cell growth and differentiation. The T cell repertoire is generated in the thymus, by V-(D)-J rearrangement. This repertoire is then shaped by intrathymic selection events to generate a peripheral T cell pool of self-MH restricted, non-autoaggressive T cells. Post-thymic interaction of alpha-beta TR with the pMH complexes shapes TR structural and functional avidity. This Homo sapiens (Human) protein is T cell receptor beta variable 5-8.